A 345-amino-acid chain; its full sequence is D-fructose 1,6-bisphosphatase class 2/sedoheptulose 1,7-bisphosphatase (345 aa).

Positions 33, 57, 97, and 100 each coordinate Mn(2+). Residues 100–102 (EGT), tyrosine 131, 176–178 (RPR), and 198–200 (DGD) contribute to the substrate site. Glutamate 225 is a binding site for Mn(2+).

The protein belongs to the FBPase class 2 family. Homotetramer. Requires Mn(2+) as cofactor.

It catalyses the reaction beta-D-fructose 1,6-bisphosphate + H2O = beta-D-fructose 6-phosphate + phosphate. It carries out the reaction D-sedoheptulose 1,7-bisphosphate + H2O = D-sedoheptulose 7-phosphate + phosphate. It functions in the pathway carbohydrate biosynthesis; Calvin cycle. Its function is as follows. Catalyzes the hydrolysis of fructose 1,6-bisphosphate (Fru 1,6-P2) and sedoheptulose 1,7-bisphosphate (Sed 1,7-P2) to fructose 6-phosphate and sedoheptulose 7-phosphate, respectively. The polypeptide is D-fructose 1,6-bisphosphatase class 2/sedoheptulose 1,7-bisphosphatase (Crocosphaera subtropica (strain ATCC 51142 / BH68) (Cyanothece sp. (strain ATCC 51142))).